Reading from the N-terminus, the 105-residue chain is Large ribosomal subunit protein uL24 (105 aa).

This sequence belongs to the universal ribosomal protein uL24 family. Part of the 50S ribosomal subunit.

Its function is as follows. One of two assembly initiator proteins, it binds directly to the 5'-end of the 23S rRNA, where it nucleates assembly of the 50S subunit. In terms of biological role, one of the proteins that surrounds the polypeptide exit tunnel on the outside of the subunit. The chain is Large ribosomal subunit protein uL24 from Clostridium botulinum (strain Langeland / NCTC 10281 / Type F).